A 644-amino-acid chain; its full sequence is MTPPPATGKPSSSLLDRVSSPADIRDFSIEELEQLTYEVRQEMIQSVSFTGGHLGAGLGVAELTVALHHIFDTPRDRLIWDVGHQAYPHKILTGRRGRMRTMRQGGGLSGFTRRSESEYDPFGAGHSSTSISAALGMAVARDLKGATNNVIAVIGDGAMSAGQAYEAMNNAGAAGSRLIVILNDNDMSIAPPVGALSAHLSRLLSSPSYHSLRHLVKDLAHLLPPSLERAVGRAEEYARGMVSGGGTLFEELGFYYVGPIDGHNFEHLLPVLKNLRDSDDTKPVMLHVVTKKGRGYPPAEAAADKYHGVGRFDVLTGQLEKPKANAPSYTSVFAKALIAEAEVDDRVVAITAAMPGGTGLDKFGDRFPARTFDVGIAEQHAVTFAGGLATEGFKPFCAIYSSFLQRAYDQVQHDVVLQKLPVRFAIDRAGLVGADGATHAGSYDMAFLGCLPDIVIMCPSDEADLMHAVATAVSIDDRPSAFRYPRGEGVGIELSERGSVMPIGKGRVVREGNRVAILSLGTRLAEALKAADELAARGLAPTVVDARFMKPLDEELILRLAREHEVLITVEEGSVGGFGSHVLHLLASKGALDNGLKVRPLALPDVFVEHDAPAIQYEKIGLNASGIVATVLATLGEARSVVSA.

Residues histidine 84 and 125-127 (GHS) contribute to the thiamine diphosphate site. Aspartate 156 is a Mg(2+) binding site. Residues 157–158 (GA), asparagine 185, tyrosine 296, and glutamate 378 contribute to the thiamine diphosphate site. Position 185 (asparagine 185) interacts with Mg(2+).

This sequence belongs to the transketolase family. DXPS subfamily. In terms of assembly, homodimer. Mg(2+) serves as cofactor. Thiamine diphosphate is required as a cofactor.

It catalyses the reaction D-glyceraldehyde 3-phosphate + pyruvate + H(+) = 1-deoxy-D-xylulose 5-phosphate + CO2. It participates in metabolic intermediate biosynthesis; 1-deoxy-D-xylulose 5-phosphate biosynthesis; 1-deoxy-D-xylulose 5-phosphate from D-glyceraldehyde 3-phosphate and pyruvate: step 1/1. Its function is as follows. Catalyzes the acyloin condensation reaction between C atoms 2 and 3 of pyruvate and glyceraldehyde 3-phosphate to yield 1-deoxy-D-xylulose-5-phosphate (DXP). The sequence is that of 1-deoxy-D-xylulose-5-phosphate synthase from Paramagnetospirillum magneticum (strain ATCC 700264 / AMB-1) (Magnetospirillum magneticum).